Consider the following 449-residue polypeptide: Ribulose bisphosphate carboxylase large chain (449 aa).

Lysine 7 carries the post-translational modification N6,N6,N6-trimethyllysine. Substrate contacts are provided by asparagine 116 and threonine 166. Catalysis depends on lysine 168, which acts as the Proton acceptor. Substrate is bound at residue lysine 170. The Mg(2+) site is built by lysine 194, aspartate 196, and glutamate 197. At lysine 194 the chain carries N6-carboxylysine. Catalysis depends on histidine 287, which acts as the Proton acceptor. Substrate is bound by residues arginine 288, histidine 320, and serine 372.

Belongs to the RuBisCO large chain family. Type I subfamily. As to quaternary structure, heterohexadecamer of 8 large chains and 8 small chains; disulfide-linked. The disulfide link is formed within the large subunit homodimers. Mg(2+) serves as cofactor. In terms of processing, the disulfide bond which can form in the large chain dimeric partners within the hexadecamer appears to be associated with oxidative stress and protein turnover.

It localises to the plastid. It is found in the chloroplast. The catalysed reaction is 2 (2R)-3-phosphoglycerate + 2 H(+) = D-ribulose 1,5-bisphosphate + CO2 + H2O. The enzyme catalyses D-ribulose 1,5-bisphosphate + O2 = 2-phosphoglycolate + (2R)-3-phosphoglycerate + 2 H(+). In terms of biological role, ruBisCO catalyzes two reactions: the carboxylation of D-ribulose 1,5-bisphosphate, the primary event in carbon dioxide fixation, as well as the oxidative fragmentation of the pentose substrate in the photorespiration process. Both reactions occur simultaneously and in competition at the same active site. In Aspidistra elatior (Cast-iron plant), this protein is Ribulose bisphosphate carboxylase large chain.